We begin with the raw amino-acid sequence, 299 residues long: MGILALVTDAVSLPIDYDMPPLLEACRTVGITAEVCDWEDGTVDWSRFEAVVFRSPWTWAERQAEFLAFCERVSHVTRLITPMPLVRWALDKRYLADLAAHGVPVIPTTVVAPGSDALAAVRDFLAARPEAREFVVKPTDGCYSKDVQRYQRSLAEPASRHVARLLANGSHVILQPYVESVDRHGETDLTFFDGVYSHAIHKGAMLMPDGTVHVPTLDFRQARDADEDQRAVAAAALAASVAHLGLDLPLVCGRVDLVRGADGSPMVLEMELCEPSLNLTFSEDGALRFAQALAERLKP.

Residues K92, K137, S144, Q175, P176, and V178 each coordinate ATP. Residues L95–K298 form the ATP-grasp domain. Active-site residues include R220 and R254. Mg(2+)-binding residues include E269 and E271. E271 is an active-site residue.

As to quaternary structure, monomer. The cofactor is Mg(2+).

It carries out the reaction O-ureido-D-serine + ATP + H2O + H(+) = D-cycloserine + NH4(+) + ADP + phosphate + CO2. Its function is as follows. Involved in the biosynthesis of the antibiotic D-cycloserine (DCS), a cyclic structural analog of D-alanine, used as an antitubercular agent. Catalyzes the synthesis of D-cycloserine from O-ureido-D-serine (D-OUS). It reacts with D-OUS, D-homocysteine and beta-aminooxy-D-alanine. The chain is Cycloserine biosynthesis protein DcsG from Streptomyces lavendulae.